The chain runs to 682 residues: Methionine--tRNA ligase (682 aa).

The 'HIGH' region motif lies at 15–25 (PYANGAIHLGH). Zn(2+) contacts are provided by Cys146, Cys149, Cys159, and Cys162. The 'KMSKS' region motif lies at 331–335 (KMSKS). An ATP-binding site is contributed by Lys334. Residues 580–682 (DFAKLDMRVA…SGVTAGMQVK (103 aa)) enclose the tRNA-binding domain.

It belongs to the class-I aminoacyl-tRNA synthetase family. MetG type 1 subfamily. In terms of assembly, homodimer. The cofactor is Zn(2+).

It is found in the cytoplasm. The enzyme catalyses tRNA(Met) + L-methionine + ATP = L-methionyl-tRNA(Met) + AMP + diphosphate. In terms of biological role, is required not only for elongation of protein synthesis but also for the initiation of all mRNA translation through initiator tRNA(fMet) aminoacylation. The protein is Methionine--tRNA ligase of Haemophilus influenzae (strain PittEE).